Consider the following 265-residue polypeptide: 4-hydroxy-2-oxo-heptane-1,7-dioate aldolase (265 aa).

His45 functions as the Proton acceptor in the catalytic mechanism. A substrate-binding site is contributed by Gln147. Residue Glu149 participates in a divalent metal cation binding. Residues Ala174 and Asp175 each contribute to the substrate site. Asp175 is a binding site for a divalent metal cation.

It belongs to the HpcH/HpaI aldolase family. In terms of assembly, homohexamer; trimer of dimers. A divalent metal cation is required as a cofactor.

The enzyme catalyses 4-hydroxy-2-oxoheptanedioate = succinate semialdehyde + pyruvate. The protein operates within aromatic compound metabolism; 4-hydroxyphenylacetate degradation; pyruvate and succinate semialdehyde from 4-hydroxyphenylacetate: step 7/7. Functionally, catalyzes the reversible retro-aldol cleavage of 4-hydroxy-2-ketoheptane-1,7-dioate (HKHD) to pyruvate and succinic semialdehyde. The polypeptide is 4-hydroxy-2-oxo-heptane-1,7-dioate aldolase (Klebsiella pneumoniae subsp. pneumoniae (strain ATCC 700721 / MGH 78578)).